The chain runs to 1235 residues: Ubiquitin carboxyl-terminal hydrolase 40 (1235 aa).

The USP domain maps to 41-482 (SGIRNQGGTC…SAYMLFYRKA (442 aa)). Cysteine 50 serves as the catalytic Nucleophile. Histidine 305 functions as the Proton acceptor in the catalytic mechanism.

The protein belongs to the peptidase C19 family.

The catalysed reaction is Thiol-dependent hydrolysis of ester, thioester, amide, peptide and isopeptide bonds formed by the C-terminal Gly of ubiquitin (a 76-residue protein attached to proteins as an intracellular targeting signal).. In Mus musculus (Mouse), this protein is Ubiquitin carboxyl-terminal hydrolase 40 (Usp40).